The primary structure comprises 196 residues: 3-isopropylmalate dehydratase small subunit (196 aa).

This sequence belongs to the LeuD family. LeuD type 1 subfamily. Heterodimer of LeuC and LeuD.

It catalyses the reaction (2R,3S)-3-isopropylmalate = (2S)-2-isopropylmalate. The protein operates within amino-acid biosynthesis; L-leucine biosynthesis; L-leucine from 3-methyl-2-oxobutanoate: step 2/4. Catalyzes the isomerization between 2-isopropylmalate and 3-isopropylmalate, via the formation of 2-isopropylmaleate. The polypeptide is 3-isopropylmalate dehydratase small subunit (Corynebacterium diphtheriae (strain ATCC 700971 / NCTC 13129 / Biotype gravis)).